The primary structure comprises 315 residues: Alpha- and gamma-adaptin-binding protein p34 (315 aa).

The segment at 197–233 (IGSADPCHPEQPHLPAADRTESLSDHRGGASNTTDAQ) is disordered. The span at 203-224 (CHPEQPHLPAADRTESLSDHRG) shows a compositional bias: basic and acidic residues. 2 positions are modified to phosphoserine: serine 310 and serine 311.

As to quaternary structure, associated with AP-1 and AP-2 complexes.

The protein localises to the cytoplasm. It localises to the cytosol. Functionally, may be involved in endocytic recycling of growth factor receptors such as EGFR. This is Alpha- and gamma-adaptin-binding protein p34 (AAGAB) from Pongo abelii (Sumatran orangutan).